The following is a 207-amino-acid chain: Dephospho-CoA kinase (207 aa).

The region spanning 10-207 (ILGLTGGIGS…FYLTLSGGQS (198 aa)) is the DPCK domain. Position 18–23 (18–23 (GSGKSA)) interacts with ATP.

Belongs to the CoaE family.

The protein resides in the cytoplasm. The enzyme catalyses 3'-dephospho-CoA + ATP = ADP + CoA + H(+). It functions in the pathway cofactor biosynthesis; coenzyme A biosynthesis; CoA from (R)-pantothenate: step 5/5. Functionally, catalyzes the phosphorylation of the 3'-hydroxyl group of dephosphocoenzyme A to form coenzyme A. The chain is Dephospho-CoA kinase from Pseudomonas fluorescens (strain Pf0-1).